A 933-amino-acid chain; its full sequence is Serine/threonine-protein kinase PknD (933 aa).

Positions 4–291 constitute a Protein kinase domain; it reads YDIIRMIGKG…ELKDDIEQHL (288 aa). ATP contacts are provided by residues 10-18 and Lys-33; that span reads IGKGGMGEV. The active-site Proton acceptor is the Asp-138.

It belongs to the protein kinase superfamily. Ser/Thr protein kinase family. Autophosphorylated on serine and threonine residues.

The catalysed reaction is L-seryl-[protein] + ATP = O-phospho-L-seryl-[protein] + ADP + H(+). It catalyses the reaction L-threonyl-[protein] + ATP = O-phospho-L-threonyl-[protein] + ADP + H(+). Together with the serine/threonine kinase Pkn1, may play a role in the specific interactions with host proteins during intracellular growth. The polypeptide is Serine/threonine-protein kinase PknD (Chlamydia felis (strain Fe/C-56) (Chlamydophila felis)).